Consider the following 156-residue polypeptide: Ribosomal RNA large subunit methyltransferase H (156 aa).

Residues Leu73, Gly104, and 123–128 each bind S-adenosyl-L-methionine; that span reads LSSLTL.

This sequence belongs to the RNA methyltransferase RlmH family. Homodimer.

It is found in the cytoplasm. It carries out the reaction pseudouridine(1915) in 23S rRNA + S-adenosyl-L-methionine = N(3)-methylpseudouridine(1915) in 23S rRNA + S-adenosyl-L-homocysteine + H(+). In terms of biological role, specifically methylates the pseudouridine at position 1915 (m3Psi1915) in 23S rRNA. The protein is Ribosomal RNA large subunit methyltransferase H of Neisseria gonorrhoeae (strain NCCP11945).